The following is a 284-amino-acid chain: 2-dehydro-3-deoxyphosphooctonate aldolase (284 aa).

It belongs to the KdsA family.

The protein localises to the cytoplasm. It catalyses the reaction D-arabinose 5-phosphate + phosphoenolpyruvate + H2O = 3-deoxy-alpha-D-manno-2-octulosonate-8-phosphate + phosphate. Its pathway is carbohydrate biosynthesis; 3-deoxy-D-manno-octulosonate biosynthesis; 3-deoxy-D-manno-octulosonate from D-ribulose 5-phosphate: step 2/3. It functions in the pathway bacterial outer membrane biogenesis; lipopolysaccharide biosynthesis. The protein is 2-dehydro-3-deoxyphosphooctonate aldolase of Klebsiella pneumoniae subsp. pneumoniae (strain ATCC 700721 / MGH 78578).